Here is a 381-residue protein sequence, read N- to C-terminus: Lipid-A-disaccharide synthase (381 aa).

Belongs to the LpxB family.

The enzyme catalyses 2-N,3-O-bis[(3R)-3-hydroxytetradecanoyl]-alpha-D-glucosaminyl 1-phosphate + UDP-2-N,3-O-bis[(3R)-3-hydroxytetradecanoyl]-alpha-D-glucosamine = lipid A disaccharide (E. coli) + UDP + H(+). It catalyses the reaction a lipid X + a UDP-2-N,3-O-bis[(3R)-3-hydroxyacyl]-alpha-D-glucosamine = a lipid A disaccharide + UDP + H(+). It participates in glycolipid biosynthesis; lipid IV(A) biosynthesis; lipid IV(A) from (3R)-3-hydroxytetradecanoyl-[acyl-carrier-protein] and UDP-N-acetyl-alpha-D-glucosamine: step 5/6. Functionally, condensation of UDP-2,3-diacylglucosamine and 2,3-diacylglucosamine-1-phosphate to form lipid A disaccharide, a precursor of lipid A, a phosphorylated glycolipid that anchors the lipopolysaccharide to the outer membrane of the cell. The sequence is that of Lipid-A-disaccharide synthase from Erwinia tasmaniensis (strain DSM 17950 / CFBP 7177 / CIP 109463 / NCPPB 4357 / Et1/99).